Here is a 328-residue protein sequence, read N- to C-terminus: Nickel import system permease protein NikB (328 aa).

A run of 6 helical transmembrane segments spans residues 11–31 (LMQM…LMKL), 104–124 (LLIS…LGII), 139–159 (VIST…LLFI), 170–190 (ILSQ…AYII), 229–249 (ILPI…GTVV), and 279–299 (VLFI…LTLL). The ABC transmembrane type-1 domain occupies 100-297 (APITLLISFS…IINTIADLLT (198 aa)).

Belongs to the binding-protein-dependent transport system permease family. OppBC subfamily. The complex is composed of two ATP-binding proteins (NikD and NikE), two transmembrane proteins (NikB and NikC) and a solute-binding protein (NikA).

Its subcellular location is the cell membrane. Functionally, part of the ABC transporter complex NikABCDE (Opp2) involved in nickel import. Probably responsible for the translocation of the substrate across the membrane. The sequence is that of Nickel import system permease protein NikB from Staphylococcus aureus (strain USA300).